Reading from the N-terminus, the 129-residue chain is Small ribosomal subunit protein uS12 (129 aa).

Aspartate 89 carries the post-translational modification 3-methylthioaspartic acid. A disordered region spans residues 110-129; sequence RKQGRSRYGAPRKQVVATKK.

It belongs to the universal ribosomal protein uS12 family. As to quaternary structure, part of the 30S ribosomal subunit. Contacts proteins S8 and S17. May interact with IF1 in the 30S initiation complex.

Functionally, with S4 and S5 plays an important role in translational accuracy. Interacts with and stabilizes bases of the 16S rRNA that are involved in tRNA selection in the A site and with the mRNA backbone. Located at the interface of the 30S and 50S subunits, it traverses the body of the 30S subunit contacting proteins on the other side and probably holding the rRNA structure together. The combined cluster of proteins S8, S12 and S17 appears to hold together the shoulder and platform of the 30S subunit. In Rickettsia bellii (strain RML369-C), this protein is Small ribosomal subunit protein uS12.